A 391-amino-acid chain; its full sequence is Phosphoprotein (391 aa).

Residues T10, T16, and T39 each carry the phosphothreonine modification. A Phosphoserine modification is found at S69. 2 disordered regions span residues S82–T101 and P143–V208. Phosphothreonine occurs at positions 91, 150, and 165. Residue S188 is modified to Phosphoserine. Polar residues predominate over residues L198–V208. Residues A218 to Q245 are a coiled coil. Residue T250 is modified to Phosphothreonine. A Phosphoserine modification is found at S257. 2 positions are modified to phosphothreonine: T258 and T282. 2 positions are modified to phosphoserine: S292 and S294. Residue T298 is modified to Phosphothreonine. S301 and S374 each carry phosphoserine. Residues A343 to I391 form an interaction with the nucleoprotein region. Positions M348–I391 are x domain (XD). T375 is subject to Phosphothreonine.

It belongs to the rubulavirus/avulavirus P protein family. As to quaternary structure, homotetramer. Interacts (via multimerization domain) with polymerase L; this interaction forms the polymerase L-P complex. Interacts (via N-terminus) with N0 (via Ncore); this interaction allows P to chaperon N0 to avoid N polymerization before encapsidation. Interacts (via C-terminus) with N-RNA template; this interaction positions the polymerase on the template for both transcription and replication. Interacts with host RPS6KB1 kinase; this interaction may play a role in the viral replication and transcription.

The protein resides in the virion. In terms of biological role, essential cofactor of the RNA polymerase L that plays a central role in the transcription and replication by forming the polymerase complex with RNA polymerase L and recruiting L to the genomic N-RNA template for RNA synthesis. Also plays a central role in the encapsidation of nascent RNA chains by forming the encapsidation complex with the nucleocapsid protein N (N-P complex). Acts as a chaperone for newly synthesized free N protein, so-called N0, allowing encapsidation of nascent RNA chains during replication. The nucleoprotein protein N prevents excessive phosphorylation of P, which leads to down-regulation of viral transcription/ replication. Participates, together with N, in the formation of viral factories (viroplasms), which are large inclusions in the host cytoplasm where replication takes place. The sequence is that of Phosphoprotein (V/P) from Mumps orthorubulavirus (MuV).